The following is a 151-amino-acid chain: C-C motif chemokine 25 (151 aa).

Residues 1–23 form the signal peptide; sequence MRPWLLACLVACFVGAWAPAIHA. Cystine bridges form between Cys-30–Cys-58 and Cys-31–Cys-75. Residues 93-151 are disordered; the sequence is RNKKDSKPHHSGRRFFQGPQSGVRKLSSGTSRPLLLKFSGPTRSSKRKASLLTTAIPGP.

It belongs to the intercrine beta (chemokine CC) family.

It localises to the secreted. Potentially involved in T-cell development. Recombinant protein shows chemotactic activity on thymocytes, macrophages, THP-1 cells, and dendritics cells but is inactive on peripheral blood lymphocytes and neutrophils. Binds to CCR9. Binds to atypical chemokine receptor ACKR4 and mediates the recruitment of beta-arrestin (ARRB1/2) to ACKR4. This chain is C-C motif chemokine 25 (CCL25), found in Sus scrofa (Pig).